The chain runs to 312 residues: Protein atonal (312 aa).

Disordered stretches follow at residues 136-174 (SNVGTCKTIPASAGPKPKRSYTKKNQPSTTATSTPTAAA) and 220-248 (NDGSFDLADGENQDAAAGGSGKKRRGKQI). The segment covering 162–174 (PSTTATSTPTAAA) has biased composition (low complexity). One can recognise a bHLH domain in the interval 255 to 307 (KRRLAANARERRRMQNLNQAFDRLRQYLPCLGNDRQLSKHETLQMAQTYISAL).

Efficient DNA binding requires dimerization with another bHLH protein. Forms a heterodimer with Daughterless. In terms of tissue distribution, proneural clusters and sense organ precursors of the chordotonal organs, optic furrow of the eye-antennal disk and developing brain lobe.

It localises to the nucleus. In terms of biological role, developmental protein involved in neurogenesis. Required for the formation of chordotonal organs and photoreceptors. Seems to bind to E boxes. Specifically required for the photoreceptor R8 selection. The polypeptide is Protein atonal (ato) (Drosophila melanogaster (Fruit fly)).